Consider the following 1476-residue polypeptide: SH3 and multiple ankyrin repeat domains protein 2 (1476 aa).

The segment covering 66-76 has biased composition (polar residues); it reads LSPQLLQQTPS. The disordered stretch occupies residues 66-134; that stretch reads LSPQLLQQTP…GANKDSLSTF (69 aa). In terms of domain architecture, SH3 spans 147 to 206; it reads VPGRLFVAVKPYQPQVDGEIPLHRGDRVKVLSIGEGGFWEGSARGHIGWFPAECVEEVQC. Val-162 is subject to Phosphoserine. In terms of domain architecture, PDZ spans 247–341; that stretch reads TVVLQKKDNE…HLILKVVTVT (95 aa). Ser-372 carries the phosphoserine modification. The tract at residues 391–412 is disordered; sequence RKKKDKPEEIVPASKPSRTAEN. Ser-456 is modified (phosphoserine). Thr-485 is modified (phosphothreonine). The segment at 503-533 is disordered; it reads LSMPDTSEDIPPPPQSVPPSPPPPSPTTYNC. A compositionally biased stretch (pro residues) spans 512–528; that stretch reads IPPPPQSVPPSPPPPSP. Ser-586 carries the post-translational modification Phosphoserine. Disordered regions lie at residues 659–916, 946–983, and 1057–1153; these read TIIV…KDRR, VPMA…TEGA, and PALA…ESMD. Residues 666–678 are compositionally biased toward low complexity; it reads STSSSGKSSQGSS. A compositionally biased stretch (basic and acidic residues) spans 711-722; that stretch reads VRDREKRLEARR. Ser-724 carries the phosphoserine modification. Residues 783 to 795 are compositionally biased toward gly residues; sequence LGGGEAGAQGEAG. Over residues 833-846 the composition is skewed to low complexity; sequence RLLDPSSPLALALS. Composition is skewed to basic and acidic residues over residues 847–868 and 899–916; these read ARDR…KADL and RRQE…KDRR. At Thr-903 the chain carries Phosphothreonine. A compositionally biased stretch (polar residues) spans 1070-1085; it reads TSQPPTLNSSQPANST. The segment covering 1119 to 1130 has biased composition (basic and acidic residues); the sequence is VDSRSSSDHHLE. Residues 1131–1151 are compositionally biased toward low complexity; that stretch reads TTSTISTVSSISTLSSEGGES. Positions 1169–1175 match the SH3-binding motif; sequence PPVPPKP. 2 disordered regions span residues 1195 to 1216 and 1260 to 1403; these read EDTD…SAQA and NRGK…ISNK. Positions 1202-1212 are enriched in pro residues; it reads IPPPAPPPPPG. Residues 1291-1305 show a composition bias toward low complexity; sequence STVSGTRSTTVTFTV. The O-linked (GlcNAc) threonine glycan is linked to Thr-1292. The segment covering 1307–1317 has biased composition (polar residues); the sequence is PGTSQPITLQS. 2 positions are modified to phosphoserine: Ser-1334 and Ser-1338. A compositionally biased stretch (polar residues) spans 1364–1375; sequence LSDVFSLPSQSP. Over residues 1387–1401 the composition is skewed to low complexity; that stretch reads RSRSPSPSILQQPIS. In terms of domain architecture, SAM spans 1413 to 1476; the sequence is WTKPDVADWL…ERALKQLLDR (64 aa).

The protein belongs to the SHANK family. As to quaternary structure, is part of a complex with DLG4/PSD-95 and DLGAP1/GKAP. Interacts with CTTN/cortactin SH3 domain, DLGAP1/GKAP and alpha-latrotoxin receptor 1. Interacts with DNM2, DBNL, GRID2, BAIAP2, SLC9A3, PLCB3 and CFTR. Interacts (via proline-rich region) with PDE4D. Interacts with ABI1 (via SH3 domain). Detected in brain (at protein level), where it is highly expressed in Purkinje cells.

It localises to the apical cell membrane. The protein localises to the cytoplasm. Its subcellular location is the synapse. It is found in the postsynaptic density. The protein resides in the cell projection. It localises to the dendritic spine. The protein localises to the growth cone. Functionally, seems to be an adapter protein in the postsynaptic density (PSD) of excitatory synapses that interconnects receptors of the postsynaptic membrane including NMDA-type and metabotropic glutamate receptors, and the actin-based cytoskeleton. May play a role in the structural and functional organization of the dendritic spine and synaptic junction. This chain is SH3 and multiple ankyrin repeat domains protein 2 (Shank2), found in Mus musculus (Mouse).